Here is a 621-residue protein sequence, read N- to C-terminus: MIEKLTFGLFKKEDARSFMRLMAYVRPYKIRIVAALIAIFGVAATESYLAAFIAPLINHGFSAPAAPPELSAAAGILSTLQNWREQFTYMVWGTENKIWTVPLFLIILVVIRGICRFTSTYLMTWVSVMTISKIRKDMFAKMLTLSSRYHQETPSGTVLMNMLNLTEQSVSNASDIFTVLTRDTMIVTGLTIVLLYLNWQLSLIVVLMFPLLSLLSRYYRDRLKHVISDSQKSIGTMNNVIAETHQGHRVVKLFNGQAQAANRFDAINRTIVRLSKKITQATAAHSPFSELIASIALAVVIFIALWQSQNGYTTIGEFMAFIVAMLQMYAPIKSLANISIPMQTMFLAADGVCAFLDTPPEQDKGTLAPQRVEGRISFRNVDVEYRSDGIKALDGFNLDIRQGERVALVGRSGSGKSTVVNLLPRFVEPSAGNICIDGIDIADIKLDCLRAQFALVSQDVFLFDDTLFENVRYSRPDAGEAEVLSALQAANLQSLIDASPLGLHQPIGSNGSNLSGGQRQRVAIARAILKDAPILLLDEATSALDNESERLVQQALERLMENRTGIIVAHRLTTIEGADRIIVMDDGKIIEQGTHEQLMSQNGYYTMLRNISNKDAAVRTA.

The next 5 helical transmembrane spans lie at 32–52, 91–111, 192–212, 286–306, and 312–332; these read IVAA…LAAF, VWGT…LVVI, IVLL…FPLL, SPFS…IALW, and YTTI…YAPI. Residues 33-344 form the ABC transmembrane type-1 domain; that stretch reads VAALIAIFGV…LANISIPMQT (312 aa). One can recognise an ABC transporter domain in the interval 378-611; it reads FRNVDVEYRS…NGYYTMLRNI (234 aa). Residue 410–417 participates in ATP binding; it reads GRSGSGKS.

It belongs to the ABC transporter superfamily. Lipid exporter (TC 3.A.1.106) family. As to quaternary structure, homodimer.

Its subcellular location is the cell inner membrane. The catalysed reaction is ATP + H2O + lipid A-core oligosaccharideSide 1 = ADP + phosphate + lipid A-core oligosaccharideSide 2.. Its function is as follows. Involved in lipopolysaccharide (LPS) biosynthesis. Translocates lipid A-core from the inner to the outer leaflet of the inner membrane. Transmembrane domains (TMD) form a pore in the inner membrane and the ATP-binding domain (NBD) is responsible for energy generation. This Neisseria meningitidis serogroup A / serotype 4A (strain DSM 15465 / Z2491) protein is ATP-dependent lipid A-core flippase.